Here is a 208-residue protein sequence, read N- to C-terminus: Protein GrpE (208 aa).

A compositionally biased stretch (basic and acidic residues) spans 1-12 (MTNKDESVEKNT). The tract at residues 1–59 (MTNKDESVEKNTESTVEETNIKQNIDDSVEQAEESKGHLQDEAIEETSDENVIEEIDPK) is disordered. The segment covering 13-23 (ESTVEETNIKQ) has biased composition (polar residues). Positions 42–55 (EAIEETSDENVIEE) are enriched in acidic residues.

The protein belongs to the GrpE family. As to quaternary structure, homodimer.

The protein resides in the cytoplasm. Its function is as follows. Participates actively in the response to hyperosmotic and heat shock by preventing the aggregation of stress-denatured proteins, in association with DnaK and GrpE. It is the nucleotide exchange factor for DnaK and may function as a thermosensor. Unfolded proteins bind initially to DnaJ; upon interaction with the DnaJ-bound protein, DnaK hydrolyzes its bound ATP, resulting in the formation of a stable complex. GrpE releases ADP from DnaK; ATP binding to DnaK triggers the release of the substrate protein, thus completing the reaction cycle. Several rounds of ATP-dependent interactions between DnaJ, DnaK and GrpE are required for fully efficient folding. The chain is Protein GrpE from Staphylococcus aureus (strain Mu3 / ATCC 700698).